Reading from the N-terminus, the 401-residue chain is Protein IQ-DOMAIN 24 (401 aa).

The segment at 1-48 (MGFFGRLFGSKKQEKATPNRRRWSFATRSSHPENDSSSHSSKRRGDED) is disordered. A calmodulin-binding region spans residues 105 to 121 (EYKAAMKIQSAFRGYLA). IQ domains lie at 105-133 (EYKA…ALVK) and 134-156 (LQAL…RMQT). 2 stretches are compositionally biased toward low complexity: residues 165-176 (RASRSSHVSDSS) and 278-287 (RSRTGSSSGG). 2 disordered regions span residues 165 to 186 (RASR…IPSS) and 258 to 296 (SPRK…PFTP).

This sequence belongs to the IQD family. Binds to multiple calmodulin (CaM) in the presence of Ca(2+) and CaM-like proteins.

It localises to the nucleus. The protein resides in the nuclear body. It is found in the cell membrane. Functionally, may be involved in cooperative interactions with calmodulins or calmodulin-like proteins. Recruits calmodulin proteins to microtubules, thus being a potential scaffold in cellular signaling and trafficking. May associate with nucleic acids and regulate gene expression at the transcriptional or post-transcriptional level. The polypeptide is Protein IQ-DOMAIN 24 (Arabidopsis thaliana (Mouse-ear cress)).